We begin with the raw amino-acid sequence, 624 residues long: UvrABC system protein C (624 aa).

Residues 27-105 (LSPGVYRMLS…IKSLGPRYNI (79 aa)) form the GIY-YIG domain. One can recognise a UVR domain in the interval 215–250 (RRVQHDLTARMESAAEAMEYEAAAVFRDRIRALTRI).

The protein belongs to the UvrC family. As to quaternary structure, interacts with UvrB in an incision complex.

The protein localises to the cytoplasm. Functionally, the UvrABC repair system catalyzes the recognition and processing of DNA lesions. UvrC both incises the 5' and 3' sides of the lesion. The N-terminal half is responsible for the 3' incision and the C-terminal half is responsible for the 5' incision. The protein is UvrABC system protein C of Paramagnetospirillum magneticum (strain ATCC 700264 / AMB-1) (Magnetospirillum magneticum).